The primary structure comprises 215 residues: Adenylate kinase (215 aa).

10-15 (GTGKGT) is a binding site for ATP. Positions 30 to 59 (STGHILRKISTKKTLFGEKIKNIINSGKLV) are NMP. AMP is bound by residues Thr31, Arg36, 57–59 (KLV), 85–88 (GFPR), and Gln92. Residues 122–157 (TRTINPITGTIYNNVIQKNSELKNLKINTLKSRLDD) are LID. ATP-binding positions include Arg123 and 132-133 (IY). AMP contacts are provided by Arg154 and Arg165. Asn198 contributes to the ATP binding site.

This sequence belongs to the adenylate kinase family. Monomer.

Its subcellular location is the cytoplasm. The enzyme catalyses AMP + ATP = 2 ADP. It participates in purine metabolism; AMP biosynthesis via salvage pathway; AMP from ADP: step 1/1. In terms of biological role, catalyzes the reversible transfer of the terminal phosphate group between ATP and AMP. Plays an important role in cellular energy homeostasis and in adenine nucleotide metabolism. The protein is Adenylate kinase of Buchnera aphidicola subsp. Baizongia pistaciae (strain Bp).